The following is an 89-amino-acid chain: Small ribosomal subunit protein bS20 (89 aa).

A disordered region spans residues 1 to 26; sequence MANIKASKKDALTSEKRRKKNSSRRS. Basic residues predominate over residues 16–26; the sequence is KRRKKNSSRRS.

The protein belongs to the bacterial ribosomal protein bS20 family.

In terms of biological role, binds directly to 16S ribosomal RNA. The sequence is that of Small ribosomal subunit protein bS20 from Buchnera aphidicola subsp. Acyrthosiphon pisum (strain 5A).